Here is a 643-residue protein sequence, read N- to C-terminus: Lysophospholipase ARB_05919 (643 aa).

Residues methionine 1–glycine 22 form the signal peptide. In terms of domain architecture, PLA2c spans aspartate 50–asparagine 597. N-linked (GlcNAc...) asparagine glycosylation is found at asparagine 142, asparagine 176, asparagine 195, asparagine 293, asparagine 466, asparagine 472, asparagine 482, asparagine 503, asparagine 524, asparagine 533, asparagine 552, and asparagine 597.

Belongs to the lysophospholipase family.

It is found in the secreted. It carries out the reaction a 1-acyl-sn-glycero-3-phosphocholine + H2O = sn-glycerol 3-phosphocholine + a fatty acid + H(+). Its function is as follows. Catalyzes the release of fatty acids from lysophospholipids. Phospholipase B may well contribute to pathogenicity by abetting the fungus in damaging host cell membranes. The polypeptide is Lysophospholipase ARB_05919 (Arthroderma benhamiae (strain ATCC MYA-4681 / CBS 112371) (Trichophyton mentagrophytes)).